The following is a 393-amino-acid chain: Formate-dependent phosphoribosylglycinamide formyltransferase (393 aa).

N(1)-(5-phospho-beta-D-ribosyl)glycinamide is bound by residues 22 to 23 (EL) and Glu-82. Residues Arg-114, Lys-155, 160–165 (SSGKGQ), 195–198 (EGFV), and Glu-203 contribute to the ATP site. One can recognise an ATP-grasp domain in the interval 119–308 (RLAAEELGLP…EFALHARAIL (190 aa)). Glu-267 and Glu-279 together coordinate Mg(2+). N(1)-(5-phospho-beta-D-ribosyl)glycinamide is bound by residues Asp-286, Lys-356, and 363–364 (RR).

It belongs to the PurK/PurT family. In terms of assembly, homodimer.

The enzyme catalyses N(1)-(5-phospho-beta-D-ribosyl)glycinamide + formate + ATP = N(2)-formyl-N(1)-(5-phospho-beta-D-ribosyl)glycinamide + ADP + phosphate + H(+). It functions in the pathway purine metabolism; IMP biosynthesis via de novo pathway; N(2)-formyl-N(1)-(5-phospho-D-ribosyl)glycinamide from N(1)-(5-phospho-D-ribosyl)glycinamide (formate route): step 1/1. Functionally, involved in the de novo purine biosynthesis. Catalyzes the transfer of formate to 5-phospho-ribosyl-glycinamide (GAR), producing 5-phospho-ribosyl-N-formylglycinamide (FGAR). Formate is provided by PurU via hydrolysis of 10-formyl-tetrahydrofolate. The chain is Formate-dependent phosphoribosylglycinamide formyltransferase from Nitratidesulfovibrio vulgaris (strain DSM 19637 / Miyazaki F) (Desulfovibrio vulgaris).